A 961-amino-acid polypeptide reads, in one-letter code: MAPKLFTFVSALSGLASLASAFHAEAKSNIAVYYGQGVNQPRLAEFCAETSYDIINIGFINSFPEQNPLTGLPGSDFGNQCWADTFVVDGIASQLYSHCPNIAEDIPKCQAAGKKVFLSLGGATPTYWFDTIDASTKLADFLWGAFGPVTDAWTVADKPRPFGNAVVDGFDFDIEFFGSKGYANMIKRFRRRFGEVPDQTFYISAAPQCSIPDEQLSVAIKNAVIDFVWVQFYNTPGCSARDFVLGTKNGFNYDSWVEVIKAGANPNAKLYVGLPASGAAANLGYYLTPEEVKPLVKKYMDKYPETFGGVMLWEATQARNNQIDGVGYNEKIREILYDLDPNHPPPTTSPTPTPTPSTTTTSTTSTTSTTSATSTTSTTSTTSTTSTTPTTSTTSTTSTTTPTPSPSPSTASSSTTETVTPSPKPSPSESSTTSETSSLPSTSTPVVSETPSETKTPTSSSAPPLSSSSPVGGSSSTASSSTSTPSETPSASSTRAVSETSTHISTSTSSGPETSLTGSSTSVPATSSSVPSSAISPSSTPVISETPRPPVTSSSSSTFVSSTSTSTDCSESSTAIGTHSSSSISETPSASTPAASPSTSPETTKTLTVFPTPGSSVSTGTTSASTLSSSVPATSGGHTETSTVSTSSANQTPSASTSKPLIPTNSASSTSTGSVTSTPSAPGVPSSSAGSDETATTSTTDSEPTSTSSGSVTAKPTTTEPATTTTIIVTSYTSICPTGFTTITTTITSTYCPGTASATATAIAPTTDVPGSGSGSSPAQPTITADIPEGWTTTVTVCTVCAATPTTVTLTLPPATTTEESTSAQPTGEVPSSDGSGSGEVSTTTVVVVPAPTGNAGDGVPAPGANVGEEYTAAPGSATTSKPLIGGGASGAHTAYPYASSTFHIIPSASAHVPVPSGSGSSPSGTQGGASPTFTGAGSRYDVVKGVPALVALALSLLAVL.

The first 21 residues, 1-21 (MAPKLFTFVSALSGLASLASA), serve as a signal peptide directing secretion. Residues 28 to 339 (SNIAVYYGQG…EKIREILYDL (312 aa)) enclose the GH18 domain. Glu175 serves as the catalytic Proton donor. Disordered stretches follow at residues 338-720 (DLDP…TTTE), 767-787 (TDVP…TADI), 813-842 (PPAT…GEVS), and 912-933 (HVPV…ASPT). The span at 342 to 355 (NHPPPTTSPTPTPT) shows a compositional bias: pro residues. Low complexity-rich tracts occupy residues 356-510 (PSTT…STSS), 519-544 (SSTS…PVIS), 552-604 (TSSS…PETT), and 612-635 (TPGS…PATS). Positions 636 to 665 (GGHTETSTVSTSSANQTPSASTSKPLIPTN) are enriched in polar residues. Residues 666–720 (SASSTSTGSVTSTPSAPGVPSSSAGSDETATTSTTDSEPTSTSSGSVTAKPTTTE) show a composition bias toward low complexity. Gly936 is lipidated: GPI-anchor amidated glycine. The propeptide at 937-961 (AGSRYDVVKGVPALVALALSLLAVL) is removed in mature form.

The protein belongs to the glycosyl hydrolase 18 family. Chitinase class III subfamily. O-glycosylated but not N-glycosylated.

It localises to the cell membrane. Its subcellular location is the secreted. It is found in the cell wall. The protein localises to the cell tip. The enzyme catalyses Random endo-hydrolysis of N-acetyl-beta-D-glucosaminide (1-&gt;4)-beta-linkages in chitin and chitodextrins.. Its function is as follows. GPI-anchored chitinase involved in the degradation of chitin, a component of the cell walls of fungi and exoskeletal elements of some animals (including worms and arthropods). Required to reshape the cell wall at the sites where cell wall remodeling and/or cell wall maturation actively take place such as sites of conidia formation. This chain is Endochitinase A (chiA), found in Emericella nidulans (Aspergillus nidulans).